We begin with the raw amino-acid sequence, 528 residues long: Bifunctional purine biosynthesis protein PurH (528 aa).

Positions 1–146 constitute an MGS-like domain; it reads MAPTALLSVS…KNHDHVAVLT (146 aa).

Belongs to the PurH family.

It carries out the reaction (6R)-10-formyltetrahydrofolate + 5-amino-1-(5-phospho-beta-D-ribosyl)imidazole-4-carboxamide = 5-formamido-1-(5-phospho-D-ribosyl)imidazole-4-carboxamide + (6S)-5,6,7,8-tetrahydrofolate. The enzyme catalyses IMP + H2O = 5-formamido-1-(5-phospho-D-ribosyl)imidazole-4-carboxamide. The protein operates within purine metabolism; IMP biosynthesis via de novo pathway; 5-formamido-1-(5-phospho-D-ribosyl)imidazole-4-carboxamide from 5-amino-1-(5-phospho-D-ribosyl)imidazole-4-carboxamide (10-formyl THF route): step 1/1. It participates in purine metabolism; IMP biosynthesis via de novo pathway; IMP from 5-formamido-1-(5-phospho-D-ribosyl)imidazole-4-carboxamide: step 1/1. The sequence is that of Bifunctional purine biosynthesis protein PurH from Synechococcus sp. (strain WH7803).